Reading from the N-terminus, the 570-residue chain is Endo-1,4-beta-xylanase 4 (570 aa).

A signal peptide spans 1 to 24; that stretch reads MKRFNYGFFHLVLFLISLLLLGSG. Residues asparagine 92, asparagine 190, and asparagine 300 are each glycosylated (N-linked (GlcNAc...) asparagine). A GH10 domain is found at 195 to 494; that stretch reads EGSVISIEQI…TQAGDLIDKL (300 aa). Glutamate 325 serves as the catalytic Proton donor. The N-linked (GlcNAc...) asparagine glycan is linked to asparagine 339. Glutamate 432 (nucleophile) is an active-site residue. N-linked (GlcNAc...) asparagine glycosylation occurs at asparagine 545.

The protein belongs to the glycosyl hydrolase 10 (cellulase F) family.

It carries out the reaction Endohydrolysis of (1-&gt;4)-beta-D-xylosidic linkages in xylans.. It participates in glycan degradation; xylan degradation. Functionally, binds to and hydrolyzes insoluble and soluble xylan substrates. This is Endo-1,4-beta-xylanase 4 from Arabidopsis thaliana (Mouse-ear cress).